The primary structure comprises 333 residues: MSADESNIICIEDDEENIEESGVKYSDKLPVCQGSSKILCRSSSQEVIQENERKKRGKNYAVPSILDDFFGVYCLLSRSPNRYFKNRCYIGYTVNPNRRIRQHNAGKEFGGAKKTDHRGPWDMVCIIHGFPNSVSALRFEWAWQNPEKSRRLRLLNLKKRTSETAFGFRLRIACHMLNSDPWRRLSLTFRWLLPELEIPFPLDVLPPSHIAVEHGAVTKISTLIPQLQEEYDVAGTCSLCLKPILSISELLRCHANETCKSHFHMRCLSKHALNAVDEYRTSLFPIQGQCPKCGVVYLWGDLIRDQRILLAVNKFNSSSTLFNMIPRGKLIKM.

Positions aspartate 68–leucine 157 constitute a GIY-YIG domain. The segment at cysteine 237–cysteine 293 adopts an SLX1-type zinc-finger fold.

The protein belongs to the SLX1 family. Forms a heterodimer with a member of the SLX4 family. It depends on a divalent metal cation as a cofactor.

The protein resides in the nucleus. In terms of biological role, catalytic subunit of a heterodimeric structure-specific endonuclease that resolves DNA secondary structures generated during DNA repair and recombination. Has endonuclease activity towards branched DNA substrates, introducing single-strand cuts in duplex DNA close to junctions with ss-DNA. The chain is Structure-specific endonuclease subunit SLX1 homolog from Brugia malayi (Filarial nematode worm).